The following is a 328-amino-acid chain: Pantothenate kinase (328 aa).

Residues 1 to 12 are compositionally biased toward polar residues; sequence MAAPLNAQTRAP. Residues 1 to 22 form a disordered region; that stretch reads MAAPLNAQTRAPQATGRAPDFS. Residue 113-120 participates in ATP binding; sequence GSVAVGKS.

It belongs to the prokaryotic pantothenate kinase family.

It is found in the cytoplasm. It carries out the reaction (R)-pantothenate + ATP = (R)-4'-phosphopantothenate + ADP + H(+). Its pathway is cofactor biosynthesis; coenzyme A biosynthesis; CoA from (R)-pantothenate: step 1/5. The polypeptide is Pantothenate kinase (Corynebacterium efficiens (strain DSM 44549 / YS-314 / AJ 12310 / JCM 11189 / NBRC 100395)).